The following is a 584-amino-acid chain: Negative regulator of RAS-cAMP pathway (584 aa).

Phosphothreonine is present on T25. 5 disordered regions span residues 95-167 (PIKP…STTS), 209-279 (PLQS…SKTS), 291-320 (SEDE…DDYN), 343-366 (NLDS…HDPV), and 381-432 (SNSN…SLKT). 3 stretches are compositionally biased toward polar residues: residues 114 to 127 (PPTT…TRPM), 229 to 254 (CIDN…SFPQ), and 267 to 278 (NDQNGQLSLSKT). 2 positions are modified to phosphoserine: S247 and S276. The segment covering 307-320 (FYADEDDEEYDDYN) has biased composition (acidic residues). Residues 343 to 363 (NLDSTKSSVSSANTINSNTSH) are compositionally biased toward polar residues. Residues 381–392 (SNSNNHNTAHSE) are compositionally biased toward low complexity. Over residues 398-432 (VSPTPQSSHSNIGPQPQQNPPSANGIKQQKPSLKT) the composition is skewed to polar residues. S442 bears the Phosphoserine mark. S518 is modified (phosphoserine; by PKA). The segment at 551–584 (DNTSIANSNGNGNDDTSNQRTEALGRKTSNGGRI) is disordered. Residues 557-568 (NSNGNGNDDTSN) show a composition bias toward low complexity.

It is found in the nucleus. Negative regulator of Ras-cAMP pathway. Involved in transcriptional regulation of galactose-inducible genes. The protein is Negative regulator of RAS-cAMP pathway (MKS1) of Saccharomyces cerevisiae (strain ATCC 204508 / S288c) (Baker's yeast).